The chain runs to 323 residues: Formyltetrahydrofolate deformylase 1, mitochondrial (323 aa).

A mitochondrion-targeting transit peptide spans Met1–His25. In terms of domain architecture, ACT spans Val41–Pro124. The active site involves Asp267.

It belongs to the PurU family. In terms of tissue distribution, expressed in leaves, cotyledons, roots, seeds and flowers.

The protein localises to the mitochondrion. The catalysed reaction is (6R)-10-formyltetrahydrofolate + H2O = (6S)-5,6,7,8-tetrahydrofolate + formate + H(+). Functionally, deformylase involved in photorespiration. Prevents excessive accumulation of 5-formyl tetrahydrofolate (THF), a potent inhibitor of the Gly decarboxylase/Ser hydroxymethyltransferase complex. In Arabidopsis thaliana (Mouse-ear cress), this protein is Formyltetrahydrofolate deformylase 1, mitochondrial (PURU1).